Here is a 91-residue protein sequence, read N- to C-terminus: Large ribosomal subunit protein bL28 (91 aa).

The tract at residues 1–23 (MSRVCELTGKGPMSGNNVSHANN) is disordered.

This sequence belongs to the bacterial ribosomal protein bL28 family.

The protein is Large ribosomal subunit protein bL28 of Paracoccus denitrificans (strain Pd 1222).